The sequence spans 495 residues: Phage-like element PBSX protein XkdE (495 aa).

Belongs to the phage portal family. PBSX subfamily.

This is Phage-like element PBSX protein XkdE (xkdE) from Bacillus subtilis (strain 168).